The following is a 634-amino-acid chain: Chaperone protein dnaK2 (634 aa).

Phosphothreonine; by autocatalysis is present on Thr197. Residues 601-620 (SAEASANAQAGPSSSSSSSS) show a composition bias toward low complexity. Residues 601 to 634 (SAEASANAQAGPSSSSSSSSGDDDVIDAEFSESK) are disordered. Residues 621 to 634 (GDDDVIDAEFSESK) show a composition bias toward acidic residues.

Belongs to the heat shock protein 70 family.

Its function is as follows. Acts as a chaperone. This Synechococcus elongatus (strain ATCC 33912 / PCC 7942 / FACHB-805) (Anacystis nidulans R2) protein is Chaperone protein dnaK2 (dnaK2).